The sequence spans 421 residues: F-box/kelch-repeat protein At1g26930 (421 aa).

Residues 54–73 (TDSSEGEDNGSSSDSGTLIP) form a disordered region. An F-box domain is found at 70 to 117 (TLIPGMNRDDSLSCLIRCSRADYCSIASVNRSLRSLIRSGEIYRLRRL). Kelch repeat units lie at residues 114-167 (LRRL…LAVG), 169-212 (DLLV…SYGE), 213-260 (IAVL…FMDG), 261-312 (KFYV…MSAA), and 320-366 (AVVN…GLAF).

This is F-box/kelch-repeat protein At1g26930 from Arabidopsis thaliana (Mouse-ear cress).